The sequence spans 156 residues: Small ribosomal subunit protein uS7 (156 aa).

This sequence belongs to the universal ribosomal protein uS7 family. As to quaternary structure, part of the 30S ribosomal subunit. Contacts proteins S9 and S11.

In terms of biological role, one of the primary rRNA binding proteins, it binds directly to 16S rRNA where it nucleates assembly of the head domain of the 30S subunit. Is located at the subunit interface close to the decoding center, probably blocks exit of the E-site tRNA. In Mycobacterium sp. (strain JLS), this protein is Small ribosomal subunit protein uS7.